The primary structure comprises 120 residues: Ribonuclease P protein component 2 (120 aa).

Belongs to the eukaryotic/archaeal RNase P protein component 2 family. As to quaternary structure, consists of a catalytic RNA component and at least 4-5 protein subunits.

The protein localises to the cytoplasm. The enzyme catalyses Endonucleolytic cleavage of RNA, removing 5'-extranucleotides from tRNA precursor.. In terms of biological role, part of ribonuclease P, a protein complex that generates mature tRNA molecules by cleaving their 5'-ends. The polypeptide is Ribonuclease P protein component 2 (Methanobrevibacter smithii (strain ATCC 35061 / DSM 861 / OCM 144 / PS)).